Consider the following 176-residue polypeptide: Large ribosomal subunit protein uL6 (176 aa).

The protein belongs to the universal ribosomal protein uL6 family. Part of the 50S ribosomal subunit.

In terms of biological role, this protein binds to the 23S rRNA, and is important in its secondary structure. It is located near the subunit interface in the base of the L7/L12 stalk, and near the tRNA binding site of the peptidyltransferase center. The chain is Large ribosomal subunit protein uL6 from Paraburkholderia phytofirmans (strain DSM 17436 / LMG 22146 / PsJN) (Burkholderia phytofirmans).